Reading from the N-terminus, the 175-residue chain is MAEQDQNTQQAGGDAPSFNLQRVYLKDLSLEMPNAPHVFLEQEQPQVEVSINVGGQRLAETVFESTVTATVTTRINDKVLYLVEGTQAGIFELANIPAEQMDALLGIVCPTMLYPYLRANVADAITRTSLPALHLAEVNFQALYEQRLAELAQQQGGNNNGSDSGIILPPGTTRQ.

Residues 154–175 form a disordered region; that stretch reads QQGGNNNGSDSGIILPPGTTRQ.

This sequence belongs to the SecB family. As to quaternary structure, homotetramer, a dimer of dimers. One homotetramer interacts with 1 SecA dimer.

The protein localises to the cytoplasm. One of the proteins required for the normal export of preproteins out of the cell cytoplasm. It is a molecular chaperone that binds to a subset of precursor proteins, maintaining them in a translocation-competent state. It also specifically binds to its receptor SecA. The polypeptide is Protein-export protein SecB (Bordetella petrii (strain ATCC BAA-461 / DSM 12804 / CCUG 43448)).